The sequence spans 497 residues: Serine hydroxymethyltransferase (497 aa).

Residues L176 and 180–182 each bind (6S)-5,6,7,8-tetrahydrofolate; that span reads GHL. K289 is modified (N6-(pyridoxal phosphate)lysine).

It belongs to the SHMT family. As to quaternary structure, homodimer. Requires pyridoxal 5'-phosphate as cofactor.

The protein resides in the cytoplasm. The catalysed reaction is (6R)-5,10-methylene-5,6,7,8-tetrahydrofolate + glycine + H2O = (6S)-5,6,7,8-tetrahydrofolate + L-serine. The protein operates within one-carbon metabolism; tetrahydrofolate interconversion. It participates in amino-acid biosynthesis; glycine biosynthesis; glycine from L-serine: step 1/1. Catalyzes the reversible interconversion of serine and glycine with tetrahydrofolate (THF) serving as the one-carbon carrier. This reaction serves as the major source of one-carbon groups required for the biosynthesis of purines, thymidylate, methionine, and other important biomolecules. Also exhibits THF-independent aldolase activity toward beta-hydroxyamino acids, producing glycine and aldehydes, via a retro-aldol mechanism. The sequence is that of Serine hydroxymethyltransferase from Chlamydia trachomatis serovar L2b (strain UCH-1/proctitis).